Here is a 119-residue protein sequence, read N- to C-terminus: Large ribosomal subunit protein bL20 (119 aa).

The protein belongs to the bacterial ribosomal protein bL20 family.

Its function is as follows. Binds directly to 23S ribosomal RNA and is necessary for the in vitro assembly process of the 50S ribosomal subunit. It is not involved in the protein synthesizing functions of that subunit. The sequence is that of Large ribosomal subunit protein bL20 from Chloroflexus aurantiacus (strain ATCC 29366 / DSM 635 / J-10-fl).